A 111-amino-acid polypeptide reads, in one-letter code: Large ribosomal subunit protein uL23 (111 aa).

This sequence belongs to the universal ribosomal protein uL23 family. As to quaternary structure, part of the 50S ribosomal subunit. Contacts protein L29, and trigger factor when it is bound to the ribosome.

Functionally, one of the early assembly proteins it binds 23S rRNA. One of the proteins that surrounds the polypeptide exit tunnel on the outside of the ribosome. Forms the main docking site for trigger factor binding to the ribosome. The sequence is that of Large ribosomal subunit protein uL23 from Nitrosospira multiformis (strain ATCC 25196 / NCIMB 11849 / C 71).